The sequence spans 197 residues: Nucleoid occlusion factor SlmA (197 aa).

One can recognise an HTH tetR-type domain in the interval 7–67 (INRREHILQC…GLIEFIEESL (61 aa)). A DNA-binding region (H-T-H motif) is located at residues 30–49 (TTAKLASEVGVSEAALYRHF). Residues 110–130 (ALLGENERLRSRISSLFAKIE) adopt a coiled-coil conformation.

It belongs to the nucleoid occlusion factor SlmA family. Homodimer. Interacts with FtsZ.

Its subcellular location is the cytoplasm. The protein resides in the nucleoid. Its function is as follows. Required for nucleoid occlusion (NO) phenomenon, which prevents Z-ring formation and cell division over the nucleoid. Acts as a DNA-associated cell division inhibitor that binds simultaneously chromosomal DNA and FtsZ, and disrupts the assembly of FtsZ polymers. SlmA-DNA-binding sequences (SBS) are dispersed on non-Ter regions of the chromosome, preventing FtsZ polymerization at these regions. The sequence is that of Nucleoid occlusion factor SlmA from Shewanella sp. (strain W3-18-1).